The following is an 856-amino-acid chain: Leucine--tRNA ligase (856 aa).

Positions P53–H63 match the 'HIGH' region motif. A 'KMSKS' region motif is present at residues K622–S626. K625 lines the ATP pocket.

Belongs to the class-I aminoacyl-tRNA synthetase family.

Its subcellular location is the cytoplasm. The enzyme catalyses tRNA(Leu) + L-leucine + ATP = L-leucyl-tRNA(Leu) + AMP + diphosphate. The protein is Leucine--tRNA ligase of Prochlorococcus marinus (strain MIT 9215).